We begin with the raw amino-acid sequence, 552 residues long: uncharacterized protein (552 aa).

One can recognise a DhaL domain in the interval 8–200; that stretch reads KLFADMIIQG…LLCVYEGFLK (193 aa).

This is an uncharacterized protein from Staphylococcus epidermidis (strain ATCC 12228 / FDA PCI 1200).